We begin with the raw amino-acid sequence, 918 residues long: Calcium-transporting ATPase type 2C member 1 (918 aa).

Topologically, residues 1-75 (MKVARFQKIP…SEDEPLWKKY (75 aa)) are cytoplasmic. The chain crosses the membrane as a helical span at residues 76 to 96 (ISQFKNPLIMLLLASAVISVL). The Extracellular segment spans residues 97-98 (MH). A helical transmembrane segment spans residues 99–119 (QFDDAVSITVAILIVVTVAFV). The Cytoplasmic portion of the chain corresponds to 120–267 (QEYRSEKSLE…LQKSMDLLGK (148 aa)). Residues 268-288 (QLSFYSFGIIGIIMLVGWLLG) form a helical membrane-spanning segment. Topologically, residues 289-302 (KDILEMFTISVSLA) are extracellular. A helical membrane pass occupies residues 303 to 323 (VAAIPEGLPIVVTVTLALGVM). Over 324 to 703 (RMVKKRAIVK…IYNNIKNFVR (380 aa)) the chain is Cytoplasmic. The active-site 4-aspartylphosphate intermediate is the D350. The Mg(2+) site is built by D643 and D647. A helical membrane pass occupies residues 704–724 (FQLSTSIAALTLISLATLMNF). At 725–732 (PNPLNAMQ) the chain is on the extracellular side. The helical transmembrane segment at 733–753 (ILWINIIMDGPPAQSLGVEPV) threads the bilayer. Over 754–773 (DKDVIRKPPRNWKDSILTKN) the chain is Cytoplasmic. The helical transmembrane segment at 774-794 (LILKILVSSIIIVCGTLFVFW) threads the bilayer. Over 795-842 (RELRDNVITPRDTTMTFTCFVFFDMFNALSSRSQTKSVFEIGLCSNKM) the chain is Extracellular. The helical transmembrane segment at 843 to 863 (FCYAVLGSIMGQLLVIYFPPL) threads the bilayer. Topologically, residues 864–873 (QKVFQTESLS) are cytoplasmic. A helical membrane pass occupies residues 874–894 (ILDLLFLLGLTSSVCIVAEII). Residues 895–918 (KKVERSREKIQKHVSSTSSSFLEV) lie on the Extracellular side of the membrane.

This sequence belongs to the cation transport ATPase (P-type) (TC 3.A.3) family. Type IIA subfamily. Monomer. Homodimer.

It localises to the golgi apparatus. Its subcellular location is the trans-Golgi network membrane. The protein localises to the golgi stack membrane. The enzyme catalyses Ca(2+)(in) + ATP + H2O = Ca(2+)(out) + ADP + phosphate + H(+). It carries out the reaction Mn(2+)(in) + ATP + H2O = Mn(2+)(out) + ADP + phosphate + H(+). Functionally, ATP-driven pump that supplies the Golgi apparatus with Ca(2+) and Mn(2+) ions, both essential cofactors for processing and trafficking of newly synthesized proteins in the secretory pathway. Within a catalytic cycle, acquires Ca(2+) or Mn(2+) ions on the cytoplasmic side of the membrane and delivers them to the lumenal side. The transfer of ions across the membrane is coupled to ATP hydrolysis and is associated with a transient phosphorylation that shifts the pump conformation from inward-facing to outward-facing state. Plays a primary role in the maintenance of Ca(2+) homeostasis in the trans-Golgi compartment with a functional impact on Golgi and post-Golgi protein sorting as well as a structural impact on cisternae morphology. Responsible for loading the Golgi stores with Ca(2+) ions in keratinocytes, contributing to keratinocyte differentiation and epidermis integrity. Participates in Ca(2+) and Mn(2+) ions uptake into the Golgi store of hippocampal neurons and regulates protein trafficking required for neural polarity. May also play a role in the maintenance of Ca(2+) and Mn(2+) homeostasis and signaling in the cytosol while preventing cytotoxicity. This Pongo abelii (Sumatran orangutan) protein is Calcium-transporting ATPase type 2C member 1 (ATP2C1).